The chain runs to 320 residues: Aspartate carbamoyltransferase catalytic subunit (320 aa).

2 residues coordinate carbamoyl phosphate: Arg70 and Thr71. Position 98 (Lys98) interacts with L-aspartate. The carbamoyl phosphate site is built by Arg120, His149, and Gln152. L-aspartate is bound by residues Arg182 and Arg237. Carbamoyl phosphate contacts are provided by Gly278 and Pro279.

This sequence belongs to the aspartate/ornithine carbamoyltransferase superfamily. ATCase family. As to quaternary structure, heterododecamer (2C3:3R2) of six catalytic PyrB chains organized as two trimers (C3), and six regulatory PyrI chains organized as three dimers (R2).

It carries out the reaction carbamoyl phosphate + L-aspartate = N-carbamoyl-L-aspartate + phosphate + H(+). It functions in the pathway pyrimidine metabolism; UMP biosynthesis via de novo pathway; (S)-dihydroorotate from bicarbonate: step 2/3. Its function is as follows. Catalyzes the condensation of carbamoyl phosphate and aspartate to form carbamoyl aspartate and inorganic phosphate, the committed step in the de novo pyrimidine nucleotide biosynthesis pathway. The polypeptide is Aspartate carbamoyltransferase catalytic subunit (Ruthia magnifica subsp. Calyptogena magnifica).